Consider the following 88-residue polypeptide: Molybdopterin synthase sulfur carrier subunit (88 aa).

Glycine 88 carries the 1-thioglycine; alternate modification. Position 88 is a glycyl adenylate; alternate (glycine 88).

It belongs to the MoaD family. MOCS2A subfamily. As to quaternary structure, heterotetramer; composed of 2 small (MOCS2A) and 2 large (MOCS2B) subunits. Post-translationally, C-terminal thiocarboxylation occurs in 2 steps, it is first acyl-adenylated (-COAMP) via the hesA/moeB/thiF part of uba4, then thiocarboxylated (-COSH) via the rhodanese domain of uba4.

It is found in the cytoplasm. It participates in cofactor biosynthesis; molybdopterin biosynthesis. In terms of biological role, acts as a sulfur carrier required for molybdopterin biosynthesis. Component of the molybdopterin synthase complex that catalyzes the conversion of precursor Z into molybdopterin by mediating the incorporation of 2 sulfur atoms into precursor Z to generate a dithiolene group. In the complex, serves as sulfur donor by being thiocarboxylated (-COSH) at its C-terminus by uba4. After interaction with MOCS2B, the sulfur is then transferred to precursor Z to form molybdopterin. The sequence is that of Molybdopterin synthase sulfur carrier subunit from Aspergillus niger (strain ATCC MYA-4892 / CBS 513.88 / FGSC A1513).